The primary structure comprises 921 residues: MTVAYSLENLKKISNSLVGDQLAKVDYFLAPKCQIFQCLLSIEQSDGVELKNAKLDLLYTLLHLEPQQRDIVGTYYFDIVSAIYKSMSLASSFTKNNSSTNYKYIKLLNLCAGVYPNCGFPDLQYLQNGFIQLVNHKFLRSKCKIDEVVTIIELLKLFLLVDEKNCSDFNKSKFMEEEREVTETSHYQDFKMAESLEHIIVKISSKYLDQISLKYIVRLKVSRPASPSSVKNDPFDNKGVDCTRAIPKKINISNMYDSSLLSLALLLYLRYHYMIPGDRKLRNDATFKMFVLGLLKSNDVNIRCVALKFLLQPYFTEDKKWEDTRTLEKILPYLVKSFNYDPLPWWFDPFDMLDSLIVLYNEITPMNNPVLTTLAHTNVIFCILSRFAQCLSLPQHNEATLKTTTKFIKICASFAASDEKYRLLLLNDTLLLNHLEYGLESHITLIQDFISLKDEIKETTTESHSMCLPPIYDHDFVAAWLLLLKSFSRSVSALRTTLKRNKIAQLLLQILSKTYTLTKECYFAGQDFMKPEIMIMGITLGSICNFVVEFSNLQSFMLRNGIIDIIEKMLTDPLFNSKKAWDDNEDERRIALQGIPVHEVKANSLWVLRHLMYNCQNEEKFQLLAKIPMNLILDFINDPCWAVQAQCFQLLRNLTCNSRKIVNILLEKFKDVEYKIDPQTGNKISIGSTYLFEFLAKKMRLLNPLDTQQKKAMEGILYIIVNLAAVNENKKQLVIEQDEILNIMSEILVETTTDSSSNGNDSNLKLACLWVLNNLLWNSSVSHYTQYAIENGLEPGHSPSDSENPQSTVTIGYNESVAGGYSRGKYYDEPDGDDSSSNANDDEDDDNDEGDDEGDEFVRTPAAKGSTSNVQVTRATVERCRKLVEVGLYDLVRKNITDESLSVREKARTLLYHMDLLLKVK.

Ser-226 is subject to Phosphoserine. ARM repeat units follow at residues 491 to 530 (VSAL…DFMK), 551 to 592 (SNLQ…RIAL), 617 to 656 (NEEK…NLTC), 683 to 725 (KISI…NLAA), and 729 to 777 (NKKQ…NLLW). The interval 822-867 (SRGKYYDEPDGDDSSSNANDDEDDDNDEGDDEGDEFVRTPAAKGST) is disordered. Acidic residues predominate over residues 829–855 (EPDGDDSSSNANDDEDDDNDEGDDEGD).

The protein belongs to the VID28/GID5 family. As to quaternary structure, identified in the GID/CTLH complex. In the absence of stress, the complex exists as an inactive anticipatory complex (GID(Ant)), composed of VID30/GID1, the E3 ubiquitin-ligase RMD5/GID2, VID28/GID5, GID8, and the RING-like subunit FYV10/GID9, awaiting a substrate receptor to form the active E3 ligase complex. When cells are shifted to glucose-containing medium, the substrate receptor VID24/GID4 is induced and becomes part of the complex, named GID(SR4). Additionally, GID7 transforms the GID(SR4) E3 ligase core into a higher-order supramolecular assembly (Chelator-GID(SR4)) specifically tailored for FBP1 ubiquitination. Under osmotic or heat stress, the substrate receptor GID10 is induced and becomes part of the complex, named GID(SR10). Within the GID complex, interacts directly with RMD5/GID2 and FYV10/GID9, and recruits VID24/GID4 to the complex when cells are shifted to glucose-containing medium.

It is found in the nucleus. It localises to the cytoplasm. In terms of biological role, component of the GID E3 ligase complex recruiting N termini and catalyzing ubiquitination of proteins targeted for degradation. GID E3 is regulated through assembly with interchangeable N-degron-binding substrate receptors induced by distinct environmental perturbations. Required for the adaptation to the presence of glucose in the growth medium; mediates in association with the substrate receptor VID24/GID4 the degradation of enzymes involved in gluconeogenesis when cells are shifted to glucose-containing medium. Required for proteasome-dependent catabolite degradation of fructose-1,6-bisphosphatase (FBP1), malate dehydrogenase (MDH2), and other gluconeogenic enzymes. This is GID complex subunit 5 from Saccharomyces cerevisiae (strain ATCC 204508 / S288c) (Baker's yeast).